The sequence spans 95 residues: RING finger protein Z (95 aa).

Low complexity predominate over residues 1 to 16 (MGNSKSKSNPSSSSES). The segment at 1–23 (MGNSKSKSNPSSSSESQKGAPTV) is disordered. Residue G2 is the site of N-myristoyl glycine; by host attachment. The RING-type; atypical zinc-finger motif lies at 40 to 76 (CKCCWFADKNLIKCSDHYLCLRCLNVMLKNSDLCNIC). A PTAP/PSAP motif motif is present at residues 90–93 (PSAP).

Belongs to the arenaviridae Z protein family. As to quaternary structure, interacts with protein NP; this interaction probably directs the encapsidated genome to budding sites. Interacts (via RING domain) with polymerase L; this interaction inhibits viral transcription and replication, Z partially blocks the product exit tunnel for the releasing nascent RNA product. Interacts with the glycoprotein complex; this interaction plays a role in virion budding. Interacts with host eIF4E; this interaction results in eIF4E reduced affinity for its substrate, the 5'-m7 G cap structure. Interacts (via late-budding domain) with host TSG101; this interaction is essential for budding and release of viral particles. Interacts with host RPLP0; this interaction may serve to load ribosome-like particles inside the virion. Interacts with host PML; this interaction induces PML bodies redistribution in the cytoplasm upon viral infection. Post-translationally, myristoylation is required for the role of RING finger protein Z in assembly and budding.

The protein localises to the virion. The protein resides in the host cytoplasm. Its subcellular location is the host perinuclear region. It localises to the host cell membrane. Plays a crucial role in virion assembly and budding. Expressed late in the virus life cycle, it acts as an inhibitor of viral transcription and RNA synthesis by interacting with the viral polymerase L. Presumably recruits the NP encapsidated genome to cellular membranes at budding sites via direct interaction with NP. Plays critical roles in the final steps of viral release by interacting with host TSG101, a member of the vacuolar protein-sorting pathway and using other cellular host proteins involved in vesicle formation pathway. The budding of the virus progeny occurs after association of protein Z with the viral glycoprotein complex SSP-GP1-GP2 at the cell periphery, step that requires myristoylation of protein Z. Also selectively represses protein production by associating with host eIF4E. In cell-based minigenome assay, has an inhibitory effect on the ribonucleoprotein machinery (vRNP), which is responsible for the replication and transcription of the viral genome. In Guanarito mammarenavirus (isolate Human/Venezuela/NH-95551/1990) (GTOV), this protein is RING finger protein Z.